The sequence spans 211 residues: Probable chemoreceptor glutamine deamidase CheD (211 aa).

This sequence belongs to the CheD family.

The enzyme catalyses L-glutaminyl-[protein] + H2O = L-glutamyl-[protein] + NH4(+). Probably deamidates glutamine residues to glutamate on methyl-accepting chemotaxis receptors (MCPs), playing an important role in chemotaxis. The sequence is that of Probable chemoreceptor glutamine deamidase CheD from Hahella chejuensis (strain KCTC 2396).